The chain runs to 500 residues: Ribose import ATP-binding protein RbsA (500 aa).

2 consecutive ABC transporter domains span residues 3-239 and 246-493; these read IEMK…VGRE and DRTP…TGGV. 35 to 42 contacts ATP; sequence GENGAGKS.

It belongs to the ABC transporter superfamily. Ribose importer (TC 3.A.1.2.1) family. As to quaternary structure, the complex is composed of an ATP-binding protein (RbsA), two transmembrane proteins (RbsC) and a solute-binding protein (RbsB).

It localises to the cell membrane. It carries out the reaction D-ribose(out) + ATP + H2O = D-ribose(in) + ADP + phosphate + H(+). In terms of biological role, part of the ABC transporter complex RbsABC involved in ribose import. Responsible for energy coupling to the transport system. This chain is Ribose import ATP-binding protein RbsA, found in Lacticaseibacillus paracasei (strain ATCC 334 / BCRC 17002 / CCUG 31169 / CIP 107868 / KCTC 3260 / NRRL B-441) (Lactobacillus paracasei).